A 352-amino-acid polypeptide reads, in one-letter code: Putative conjugal transfer protein MT3759 (352 aa).

160-167 (GGTGAGKT) contacts ATP.

Belongs to the GSP E family.

The protein resides in the cytoplasm. This chain is Putative conjugal transfer protein MT3759, found in Mycobacterium tuberculosis (strain CDC 1551 / Oshkosh).